We begin with the raw amino-acid sequence, 175 residues long: Methylated-DNA--protein-cysteine methyltransferase (175 aa).

C142 (nucleophile; methyl group acceptor) is an active-site residue.

The protein belongs to the MGMT family.

It localises to the cytoplasm. It catalyses the reaction a 6-O-methyl-2'-deoxyguanosine in DNA + L-cysteinyl-[protein] = S-methyl-L-cysteinyl-[protein] + a 2'-deoxyguanosine in DNA. The catalysed reaction is a 4-O-methyl-thymidine in DNA + L-cysteinyl-[protein] = a thymidine in DNA + S-methyl-L-cysteinyl-[protein]. Functionally, involved in the cellular defense against the biological effects of O6-methylguanine (O6-MeG) and O4-methylthymine (O4-MeT) in DNA. Repairs the methylated nucleobase in DNA by stoichiometrically transferring the methyl group to a cysteine residue in the enzyme. This is a suicide reaction: the enzyme is irreversibly inactivated. In Thermococcus sibiricus (strain DSM 12597 / MM 739), this protein is Methylated-DNA--protein-cysteine methyltransferase.